A 188-amino-acid polypeptide reads, in one-letter code: Putative adenylate kinase (188 aa).

The ATP site is built by G10, G12, K13, S14, and T15. An NMP region spans residues 30–53 (HVSSFLIQNKAFSEYDELRQSYVI). The LID stretch occupies residues 103-113 (RRGWGELKIAE). Residues R104 and K142 each coordinate ATP.

It belongs to the adenylate kinase family. AK6 subfamily. As to quaternary structure, interacts with uS11. Not a structural component of 40S pre-ribosomes, but transiently interacts with them by binding to uS11.

It carries out the reaction AMP + ATP = 2 ADP. It catalyses the reaction ATP + H2O = ADP + phosphate + H(+). Its function is as follows. Broad-specificity nucleoside monophosphate (NMP) kinase that catalyzes the reversible transfer of the terminal phosphate group between nucleoside triphosphates and monophosphates. Also has ATPase activity. Involved in the late maturation steps of the 30S ribosomal particles, specifically 16S rRNA maturation. While NMP activity is not required for ribosome maturation, ATPase activity is. Associates transiently with small ribosomal subunit protein uS11. ATP hydrolysis breaks the interaction with uS11. May temporarily remove uS11 from the ribosome to enable a conformational change of the ribosomal RNA that is needed for the final maturation step of the small ribosomal subunit. In Sulfurisphaera tokodaii (strain DSM 16993 / JCM 10545 / NBRC 100140 / 7) (Sulfolobus tokodaii), this protein is Putative adenylate kinase.